A 202-amino-acid chain; its full sequence is Guanylate kinase (202 aa).

Positions 3–181 (GNLFIITAPS…ALEDLRAIIR (179 aa)) constitute a Guanylate kinase-like domain. 10–17 (APSGAGKT) lines the ATP pocket.

The protein belongs to the guanylate kinase family.

Its subcellular location is the cytoplasm. The catalysed reaction is GMP + ATP = GDP + ADP. In terms of biological role, essential for recycling GMP and indirectly, cGMP. The chain is Guanylate kinase from Methylobacillus flagellatus (strain ATCC 51484 / DSM 6875 / VKM B-1610 / KT).